Here is a 173-residue protein sequence, read N- to C-terminus: Inorganic pyrophosphatase (173 aa).

Substrate-binding residues include lysine 29, arginine 43, and tyrosine 55. Mg(2+) is bound by residues aspartate 65, aspartate 70, and aspartate 102. Substrate is bound at residue tyrosine 141.

This sequence belongs to the PPase family. As to quaternary structure, homohexamer. The cofactor is Mg(2+).

Its subcellular location is the cytoplasm. It catalyses the reaction diphosphate + H2O = 2 phosphate + H(+). In terms of biological role, catalyzes the hydrolysis of inorganic pyrophosphate (PPi) forming two phosphate ions. The sequence is that of Inorganic pyrophosphatase from Rickettsia conorii (strain ATCC VR-613 / Malish 7).